The primary structure comprises 140 residues: Cell division protein SepF (140 aa).

A disordered region spans residues 15-47; that stretch reads DSQYEEPTEASQAAAPTESATNTRSTPKVVPMQ.

The protein belongs to the SepF family. As to quaternary structure, homodimer. Interacts with FtsZ.

The protein resides in the cytoplasm. Its function is as follows. Cell division protein that is part of the divisome complex and is recruited early to the Z-ring. Probably stimulates Z-ring formation, perhaps through the cross-linking of FtsZ protofilaments. Its function overlaps with FtsA. The sequence is that of Cell division protein SepF from Lactiplantibacillus plantarum (strain ATCC BAA-793 / NCIMB 8826 / WCFS1) (Lactobacillus plantarum).